The following is a 434-amino-acid chain: Prenyltransferase fogH (434 aa).

Glutamate 86 is a binding site for L-tryptophan. The substrate site is built by arginine 101, arginine 248, lysine 250, tyrosine 252, and tyrosine 346.

The protein belongs to the tryptophan dimethylallyltransferase family.

It functions in the pathway secondary metabolite biosynthesis. Prenyltransferase; part of the gene cluster that mediates the biosynthesis of flavoglaucin and congeners (including aspergin, dihydroauroglaucin and auroglaucin), prenylated salicylaldehyde derivatives carrying a saturated or an unsaturated C-7 side chain. The PKS fogA releases the carboxylic acid (8E,10E,12E)-3,5,7-trihydroxytetradeca-8,10,12-trienoic acid as its product, as well as derivatives with one and two double bonds. FogA is indeed able to reduce the initial triketide, thus being at least partially responsible for the differently saturated heptyl side chains of flavoglaucin congeners. The oxidoreductases fogB, fogC and fogD modify the nascent polyketide in fogA-bound form and, together, fogA, fogB, fogC and fogD are necessary for the formation of the aromatic core and the cyclized PKS products are released as salicyl alcohols. In particular, fogB is responsible for oxidation of a hydroxyl group or reduction of remaining double bond(s) at the C-7 residue whereas fogD is probably involved in the reductive release of the modified PKS products. The cytochrome P450 monooxygenase fogE is then responsible for the hydroxylation at C-3 of the benzene ring. The fogE products are substrates of the prenyltransferase fogH and the prenylated benzyl alcohols are subsequently oxidized by the fogF to produce the final aryl aldehydes flavoglaucin and congeners. The short-chain dehydrogenase fogG does not seem to be involved in the biosynthesis of the prenylated salicylaldehyde derivatives. The chain is Prenyltransferase fogH from Aspergillus ruber (strain CBS 135680).